The primary structure comprises 819 residues: DNA topoisomerase 4 subunit A (819 aa).

The Topo IIA-type catalytic domain maps to 30-496 (LPDIRDGLKP…QIIEIDTASL (467 aa)). Y118 acts as the O-(5'-phospho-DNA)-tyrosine intermediate in catalysis.

The protein belongs to the type II topoisomerase GyrA/ParC subunit family. ParC type 2 subfamily. As to quaternary structure, heterotetramer composed of ParC and ParE.

The protein resides in the cell membrane. It catalyses the reaction ATP-dependent breakage, passage and rejoining of double-stranded DNA.. In terms of biological role, topoisomerase IV is essential for chromosome segregation. It relaxes supercoiled DNA. Performs the decatenation events required during the replication of a circular DNA molecule. This chain is DNA topoisomerase 4 subunit A, found in Streptococcus pyogenes serotype M3 (strain SSI-1).